Here is a 124-residue protein sequence, read N- to C-terminus: Small ribosomal subunit protein uS13 (124 aa).

The disordered stretch occupies residues 94 to 124 (GLPLRGQRTKNNSRTRKGKRKTVANKKKATK). Positions 100-124 (QRTKNNSRTRKGKRKTVANKKKATK) are enriched in basic residues.

It belongs to the universal ribosomal protein uS13 family. In terms of assembly, part of the 30S ribosomal subunit. Forms a loose heterodimer with protein S19. Forms two bridges to the 50S subunit in the 70S ribosome.

In terms of biological role, located at the top of the head of the 30S subunit, it contacts several helices of the 16S rRNA. In the 70S ribosome it contacts the 23S rRNA (bridge B1a) and protein L5 of the 50S subunit (bridge B1b), connecting the 2 subunits; these bridges are implicated in subunit movement. Contacts the tRNAs in the A and P-sites. The chain is Small ribosomal subunit protein uS13 from Flavobacterium johnsoniae (strain ATCC 17061 / DSM 2064 / JCM 8514 / BCRC 14874 / CCUG 350202 / NBRC 14942 / NCIMB 11054 / UW101) (Cytophaga johnsonae).